We begin with the raw amino-acid sequence, 148 residues long: 3-dehydroquinate dehydratase (148 aa).

Tyr-23 serves as the catalytic Proton acceptor. Positions 75, 81, and 88 each coordinate substrate. The active-site Proton donor is His-101. Residues 102–103 and Arg-112 contribute to the substrate site; that span reads LS.

The protein belongs to the type-II 3-dehydroquinase family. As to quaternary structure, homododecamer.

The catalysed reaction is 3-dehydroquinate = 3-dehydroshikimate + H2O. It participates in metabolic intermediate biosynthesis; chorismate biosynthesis; chorismate from D-erythrose 4-phosphate and phosphoenolpyruvate: step 3/7. Functionally, catalyzes a trans-dehydration via an enolate intermediate. The chain is 3-dehydroquinate dehydratase from Ectopseudomonas mendocina (strain ymp) (Pseudomonas mendocina).